Here is a 90-residue protein sequence, read N- to C-terminus: Small ribosomal subunit protein bS20 (90 aa).

A compositionally biased stretch (basic residues) spans 1–15; the sequence is MANHKSAQKRIRQTK. Positions 1 to 22 are disordered; sequence MANHKSAQKRIRQTKTRTERNR.

Belongs to the bacterial ribosomal protein bS20 family.

In terms of biological role, binds directly to 16S ribosomal RNA. This is Small ribosomal subunit protein bS20 from Helicobacter hepaticus (strain ATCC 51449 / 3B1).